We begin with the raw amino-acid sequence, 1251 residues long: Myosin-1 (1251 aa).

The tract at residues 1-37 is disordered; the sequence is MGQSKRPFKNKEEKKSRGFGRSRHDDAGAGGRPQVKK. The segment covering 9 to 27 has biased composition (basic and acidic residues); sequence KNKEEKKSRGFGRSRHDDA. A Myosin motor domain is found at 48-727; it reads IGVSDLTLLS…TLFALEHMRD (680 aa). 141-148 is a binding site for ATP; it reads GESGAGKT. A Phosphoserine modification is found at Ser-369. The interval 416–498 is actin-binding; it reads TIGILDIYGF…PGVFAALNDA (83 aa). IQ domains follow at residues 731–751 and 752–777; these read HNMATRIQRAWRNYLRYRTEC and AIRIQRFWRRVTGGLEFIKLRDQGHK. The 196-residue stretch at 785 to 980 folds into the TH1 domain; it reads RRRYSLVGSR…PGEPANSVSK (196 aa). Disordered regions lie at residues 958 to 1093 and 1135 to 1227; these read RDDV…SNEL and AKTP…ASIA. Residues 1040-1052 show a composition bias toward low complexity; it reads VAQSVTAVAAAHA. The span at 1061–1073 shows a compositional bias: pro residues; that stretch reads RPPPPPPPTQPPA. The SH3 domain maps to 1074–1135; sequence PKKDTAKALY…PEAYLEPIVA (62 aa). The span at 1139-1148 shows a compositional bias: pro residues; it reads SLPPPPPSLP. Polar residues-rich tracts occupy residues 1150-1161 and 1216-1225; these read QSKSAVSNTLPN and ATPSSLSNAS.

The protein belongs to the TRAFAC class myosin-kinesin ATPase superfamily. Myosin family. In terms of processing, phosphorylation of the TEDS site (Ser-369) is required for the polarization of the actin cytoskeleton. Phosphorylation probably activates the myosin-I ATPase activity.

It localises to the cytoplasm. The protein localises to the cytoskeleton. The protein resides in the actin patch. In terms of biological role, type-I myosin implicated in the organization of the actin cytoskeleton. Required for proper actin cytoskeleton polarization. At the cell cortex, assembles in patch-like structures together with proteins from the actin-polymerizing machinery and promotes actin assembly. Functions as actin nucleation-promoting factor (NPF) for the Arp2/3 complex. In Coccidioides immitis (strain RS) (Valley fever fungus), this protein is Myosin-1 (MYO1).